The following is a 278-amino-acid chain: Putative cysteine-rich repeat secretory protein 17 (278 aa).

The first 32 residues, 1 to 32, serve as a signal peptide directing secretion; the sequence is MYSLSSVSKHLILVHILALVATQLLLIRSVSS. 2 Gnk2-homologous domains span residues 39–142 and 148–265; these read YLNH…SIDN and YGDS…LYPF.

This sequence belongs to the cysteine-rich repeat secretory protein family.

The protein resides in the secreted. This is Putative cysteine-rich repeat secretory protein 17 (CRRSP17) from Arabidopsis thaliana (Mouse-ear cress).